The following is a 209-amino-acid chain: Dual specificity protein phosphatase 22 (209 aa).

Residues 4–144 (GMNKILPSLF…LEDFGKHDVY (141 aa)) enclose the Tyrosine-protein phosphatase domain. Cys88 functions as the Phosphocysteine intermediate in the catalytic mechanism. A disordered region spans residues 170-193 (DKHKQQEAAESQSATSSGRQWSSH). A compositionally biased stretch (low complexity) spans 177 to 193 (AAESQSATSSGRQWSSH).

It belongs to the protein-tyrosine phosphatase family. Non-receptor class dual specificity subfamily.

The protein localises to the cytoplasm. Its subcellular location is the nucleus. It carries out the reaction O-phospho-L-tyrosyl-[protein] + H2O = L-tyrosyl-[protein] + phosphate. The catalysed reaction is O-phospho-L-seryl-[protein] + H2O = L-seryl-[protein] + phosphate. It catalyses the reaction O-phospho-L-threonyl-[protein] + H2O = L-threonyl-[protein] + phosphate. In terms of biological role, activates the Jnk signaling pathway. Dephosphorylates and deactivates p38 and stress-activated protein kinase/c-Jun N-terminal kinase (SAPK/JNK). The polypeptide is Dual specificity protein phosphatase 22 (dusp22) (Xenopus tropicalis (Western clawed frog)).